The sequence spans 143 residues: Large ribosomal subunit protein uL13 (143 aa).

Belongs to the universal ribosomal protein uL13 family. Part of the 50S ribosomal subunit.

Functionally, this protein is one of the early assembly proteins of the 50S ribosomal subunit, although it is not seen to bind rRNA by itself. It is important during the early stages of 50S assembly. The protein is Large ribosomal subunit protein uL13 of Finegoldia magna (strain ATCC 29328 / DSM 20472 / WAL 2508) (Peptostreptococcus magnus).